The following is a 1254-amino-acid chain: MLQRPPHRESFNDKEEIIDLPNLIEIQIKSYNQFLQADKFPDERENIGLQEVFTEIFPIKSYDEKTILEFLSYNLGVPKYNPEECIRRGITYNVTLKVKFRLTDETGIKEEEVYMGTIPVMTDKGTFIVNGAERVVVSQLHRSPGICFEQERHSRGNVIYSFRIIPYRGSWLEGAFDTNDLIHIYIDRKKRRRKILATTFIRALGYSSNSDIIEEFFTTRKYKIKNEKEFAKLVGKILAQDVVDEESGLVFGKASEKLTTAMLKRIVDAGIDVIRIAEDADETSPVIKMLAKDPTDSYESALKDFYRKIRPGEPATLSNARSAIMRLFFDPKRYNLGRVGRYKLNSKLGCEINDEKLQTVTLDKEDVIGALKYLIMLKSGSEEASIDDIDHLGNRRVRSVGELIQNQCRIGLARMEKIIRERMNLFDFSSDTLTPGKIVSAKGLSGVLKDFFGRSQLSQFMDQTNPIAELTHKRRLSSLGPGGLNRDRAGFEVRDVHTSHYGRICPIETPEGPNIGLISSLSSFAKINEFGFIETPYRIVREGVVTDEIEYMTADQEEQCVIAQASAPLDEYHMFAEPICWARYKGEQFETDTKNVTHMDVSPKQLVSIVTGLIPFLEHDDANRALMGSNMQRQGVPLLKPTAPIVGTGLEARAARDSGAVLIAHEDGVVDYVDGLKIVISPDDNRLEKRTYLLKKFIRSNAGTCINQRPLCHVGDKIKAGDVIADGPATDKGEVALGRNVLVAFMPWFGYNYEDAIIISEKLLREDYYTSLYIEEFELTARDTKLGKEEITRDIPNVSEETLRNLNDDGIIRIGAEVKPGDTLVGKITPKSETELAPEERLLRAIFGDKASDVKDASLIAPPGTEGVVMDVKVFSRRDRLSKTDDELVEEASKLKDIQREYKSNQAQLRTEKHERVGALLLNETAPGNIVHRRTAEIIVDEGDLITQDLIEALEKESVEDLLMPENDIYTTLRQILHDYEIALQTVETQYKTQLEFMRKGDTDLDPGVIRQVKVYVASKRKLQVGDKMAGRHGNKGVVSKIVPEADMPFLSTGQTIEIILNPLGVPSRMNMGQLFETHLGIAAKHTGITVKSPVFEGFPEEKIWEMMKKAGLPEDGKFFLYDGCSGERFDNSVVVGYIYMLKLSHLVADKIHARAVGPYSLVTQQPLGGKAQMGGQRFGEMEVWAAEAYGAAHLLQEMLTVKSDDVAGRTRIYESIVKGENLLKSGTPESFNVLIKEMQGLGLNVYTEAVDDS.

This sequence belongs to the RNA polymerase beta chain family. The RNAP catalytic core consists of 2 alpha, 1 beta, 1 beta' and 1 omega subunit. When a sigma factor is associated with the core the holoenzyme is formed, which can initiate transcription.

The enzyme catalyses RNA(n) + a ribonucleoside 5'-triphosphate = RNA(n+1) + diphosphate. In terms of biological role, DNA-dependent RNA polymerase catalyzes the transcription of DNA into RNA using the four ribonucleoside triphosphates as substrates. This is DNA-directed RNA polymerase subunit beta from Protochlamydia amoebophila (strain UWE25).